We begin with the raw amino-acid sequence, 448 residues long: Probable glycine dehydrogenase (decarboxylating) subunit 1 (448 aa).

The protein belongs to the GcvP family. N-terminal subunit subfamily. As to quaternary structure, the glycine cleavage system is composed of four proteins: P, T, L and H. In this organism, the P 'protein' is a heterodimer of two subunits.

It carries out the reaction N(6)-[(R)-lipoyl]-L-lysyl-[glycine-cleavage complex H protein] + glycine + H(+) = N(6)-[(R)-S(8)-aminomethyldihydrolipoyl]-L-lysyl-[glycine-cleavage complex H protein] + CO2. Its function is as follows. The glycine cleavage system catalyzes the degradation of glycine. The P protein binds the alpha-amino group of glycine through its pyridoxal phosphate cofactor; CO(2) is released and the remaining methylamine moiety is then transferred to the lipoamide cofactor of the H protein. This Staphylococcus aureus (strain Mu3 / ATCC 700698) protein is Probable glycine dehydrogenase (decarboxylating) subunit 1.